The chain runs to 781 residues: MSLPKTANGMDKLKLCYLLLFYLGSSSLTEVSGAQTCEIDSVLCTSDLSEPDDPPIFHDLTTKEIKSVQTYLYHQRDLRLLRPGLAKINTSFIQGMELYLPNKKDVIHYLQSKVPTPKPPRAAVVTIFRGDCDPAVVEEYIVFPLPWPTQHRLHRKVPYYLRPFNDVEFATISDFLTKQVDGVLRQFLEESFGGRLINCGNRCLNFQFASPVGPSVSNEPGARKSWYWLHQLVEYSALHPVDFAVLMKIVGCVYTIEKVYFNNMYFNSLQEVALHYRNPSFPRLRIPYPVDSKQLFSKMERRGILFPEKPVSPPRQVEPEGKRYSVKYQEVKYMNWKFNFRLSPGLGPRLHNIRYHDRLIVYELALQDIVVFYSGAEPPHQYANFFDSSYMIGMNLQGMVPGVDCPTGATFIDSHILTESSLKPAKLINAFCVFEQNTGDFLRRHISKTSPDGPFYEGVPSIVLVLRAITTIANYDYTIDFIFHHNGVLQTKVVPTGYILPSLYTKQNENKYGFRLNNKLIGNLHHHLFNFKVDIDINGQHNRYETLDIVLDKTSHPVSKKPYDVWYQNKIKHNLRKTEMEALFKYDFDKPMHHIFYNNNLKSPEGNNMAYRLVNRGMSKSLLPECSGNEGTGAWMRHQIAVTKRKETELTSSSVYSAFGTKNPVVNFRNFYADNENIVDEDLVAWVTMGTYHIPHTEDLPVTHTPGLDLSFFLSPFNYFPEDPAMGSRDSVRIEAVDKNNLKRGIKIDKQTFPEKMTCKAPIGNYFEYILKRPNVIFDIQ.

A signal peptide spans 1–34 (MSLPKTANGMDKLKLCYLLLFYLGSSSLTEVSGA). An intrachain disulfide couples Cys199 to Cys203. 385–395 (FFDSSYMIGMN) contacts substrate. The active-site Proton acceptor is Asp387. Cysteines 405 and 432 form a disulfide. Position 472–477 (472–477 (IANYDY)) interacts with substrate. Catalysis depends on Tyr475, which acts as the Schiff-base intermediate with substrate; via topaquinone. Tyr475 carries the post-translational modification 2',4',5'-topaquinone. Residues His525 and His527 each contribute to the Cu cation site. Asp534, Asp536, Glu579, Phe671, Asp674, Glu676, Asp682, and Leu683 together coordinate Ca(2+). Mn(2+)-binding residues include Asp534 and Asp536. Mn(2+) is bound at residue Asp682. Residue His693 coordinates Cu cation.

It belongs to the copper/topaquinone oxidase family. In terms of assembly, homodimer. The cofactor is Cu cation. Ca(2+) serves as cofactor. Requires L-topaquinone as cofactor. Mn(2+) is required as a cofactor. Topaquinone (TPQ) is generated by copper-dependent autoxidation of a specific tyrosyl residue. In terms of tissue distribution, prismatic layer of shell (at protein level). Expressed primarily in the mantle with highest level in the mantle edge and lower level in the mantle pallium.

The protein localises to the secreted. In Margaritifera margaritifera (Freshwater pearl mussel), this protein is Putative amine oxidase [copper-containing].